The primary structure comprises 938 residues: Isoleucine--tRNA ligase (938 aa).

The short motif at 58–68 (PYANGNIHIGH) is the 'HIGH' region element. Residue glutamate 563 participates in L-isoleucyl-5'-AMP binding. A 'KMSKS' region motif is present at residues 604 to 608 (KMSKS). An ATP-binding site is contributed by lysine 607. Cysteine 903, cysteine 906, cysteine 921, and cysteine 924 together coordinate Zn(2+).

It belongs to the class-I aminoacyl-tRNA synthetase family. IleS type 1 subfamily. In terms of assembly, monomer. It depends on Zn(2+) as a cofactor.

The protein resides in the cytoplasm. It catalyses the reaction tRNA(Ile) + L-isoleucine + ATP = L-isoleucyl-tRNA(Ile) + AMP + diphosphate. Its function is as follows. Catalyzes the attachment of isoleucine to tRNA(Ile). As IleRS can inadvertently accommodate and process structurally similar amino acids such as valine, to avoid such errors it has two additional distinct tRNA(Ile)-dependent editing activities. One activity is designated as 'pretransfer' editing and involves the hydrolysis of activated Val-AMP. The other activity is designated 'posttransfer' editing and involves deacylation of mischarged Val-tRNA(Ile). The chain is Isoleucine--tRNA ligase from Buchnera aphidicola subsp. Schizaphis graminum (strain Sg).